Consider the following 425-residue polypeptide: Pre-mRNA-splicing factor PRP46 (425 aa).

7 WD repeats span residues 111 to 151 (GHTG…LKVT), 154 to 193 (GHIMTVRDICISARHPYMFSASQDKLVKCWDLERNTVVRD), 196 to 235 (GTLSGVHSVDLHPSLDLIVSAGRDSVVRVWDIRSRSCVLT), 238 to 279 (GHRG…KTLT), 281 to 320 (HKRNVRDLAFNPTEFSFASACTDDIRSWKLVDGQLLTNFN), 322 to 360 (EALGIVNTLACNQDGVLFAGGDTGELSFFDYKTGHKFQK), and 371 to 410 (ESEKGVLASTFDRTGLRLLTCERDKSIKIWKHIDGATQDS).

Belongs to the WD repeat PRL1/PRL2 family. In terms of assembly, associated with the spliceosome.

The protein resides in the cytoplasm. The protein localises to the nucleus. Functionally, involved in pre-mRNA splicing and required for cell cycle progression at G2/M. This chain is Pre-mRNA-splicing factor PRP46 (PRP46), found in Eremothecium gossypii (strain ATCC 10895 / CBS 109.51 / FGSC 9923 / NRRL Y-1056) (Yeast).